The chain runs to 837 residues: Protein ROD1 (837 aa).

Residues Ser-138 and Ser-141 each carry the phosphoserine modification. Lys-401 is covalently cross-linked (Glycyl lysine isopeptide (Lys-Gly) (interchain with G-Cter in ubiquitin)). Ser-436 is modified (phosphoserine). The PY-motif signature appears at 487–490 (PPNY). Phosphoserine is present on Ser-536. Residues 656-659 (PPAY) carry the PY-motif motif. 2 disordered regions span residues 675-726 (ERPQ…SVSL) and 763-837 (SFTS…RDRS). The span at 685 to 703 (TSSLLPLPGSSKSSNNLKR) shows a compositional bias: low complexity. Residues 716–726 (PRNNSGSSVSL) are compositionally biased toward polar residues. Phosphoserine is present on residues Ser-720 and Ser-725. Residues 763-773 (SFTSNSSSKNN) show a composition bias toward low complexity. Positions 774–792 (SHFDKTDSTSDANKPREEE) are enriched in basic and acidic residues. The segment covering 805-815 (SSSVRSNNSNS) has biased composition (low complexity).

It belongs to the arrestin family. Interacts with RSP5 via its 2 PY-motifs.

Its subcellular location is the membrane. Its function is as follows. Mediates resistance to o-dinitrobenzene, calcium and zinc. The protein is Protein ROD1 (ROD1) of Saccharomyces cerevisiae (strain ATCC 204508 / S288c) (Baker's yeast).